The chain runs to 550 residues: Chaperonin GroEL (550 aa).

ATP is bound by residues 29–32 (TAGP), Lys-50, 86–90 (DGTTT), Gly-418, and Asp-499.

Belongs to the chaperonin (HSP60) family. In terms of assembly, forms a cylinder of 14 subunits composed of two heptameric rings stacked back-to-back. Interacts with the co-chaperonin GroES.

It localises to the cytoplasm. The enzyme catalyses ATP + H2O + a folded polypeptide = ADP + phosphate + an unfolded polypeptide.. Together with its co-chaperonin GroES, plays an essential role in assisting protein folding. The GroEL-GroES system forms a nano-cage that allows encapsulation of the non-native substrate proteins and provides a physical environment optimized to promote and accelerate protein folding. This Wolbachia sp. subsp. Brugia malayi (strain TRS) protein is Chaperonin GroEL.